A 724-amino-acid polypeptide reads, in one-letter code: Hyperosmolality-gated Ca2+ permeable channel 3.1 (724 aa).

Topologically, residues 1–4 are extracellular; sequence MEFG. The helical transmembrane segment at 5–25 threads the bilayer; the sequence is SFLVSLGTSFVIFVILMLLFT. Topologically, residues 26–85 are cytoplasmic; sequence WLSRKSGNAPIYYPNRILKGLEPWEGTSLTRNPFAWMREALTSSEQDVVNLSGVDTAVHF. The chain crosses the membrane as a helical span at residues 86–108; that stretch reads VFLSTVLGIFACSSLLLLPTLLP. Over 109 to 147 the chain is Extracellular; sequence LAATDNNIKNTKNATDTTSKGTFSQLDNLSMANITKKSS. A helical membrane pass occupies residues 148–170; it reads RLWAFLGAVYWISLVTYFFLWKA. Residues 171-358 lie on the Cytoplasmic side of the membrane; the sequence is YKHVSSLRAQ…WQNLNIKLFS (188 aa). A coiled-coil region spans residues 241-309; sequence EKLEGYKKKL…KAVLAEKQQT (69 aa). The chain crosses the membrane as a helical span at residues 359–385; it reads RIIRQYFIYFFVAVTILFYMIPIAFVS. At 386 to 411 the chain is on the extracellular side; sequence AITTLKNLQRIIPFIKPVVEITAIRT. A helical transmembrane segment spans residues 412–439; the sequence is VLESFLPQIALIVFLAMLPKLLLFLSKA. The Cytoplasmic segment spans residues 440-448; that stretch reads EGIPSQSHA. The helical transmembrane segment at 449–472 threads the bilayer; it reads IRAASGKYFYFSVFNVFIGVTLAG. Residues 473 to 497 lie on the Extracellular side of the membrane; the sequence is TLFNTVKDIAKNPKLDMIINLLATS. A helical membrane pass occupies residues 498–529; that stretch reads LPKSATFFLTYVALKFFIGYGLELSRIIPLII. Residues 530 to 554 are Cytoplasmic-facing; sequence FHLKKKYLCKTEAEVKEAWYPGDLS. A helical transmembrane segment spans residues 555–574; it reads YATRVPGDMLILTITFCYSV. Position 575 (isoleucine 575) is a topological domain, extracellular. The helical transmembrane segment at 576–594 threads the bilayer; it reads APLILIFGITYFGLGWLVL. The Cytoplasmic portion of the chain corresponds to 595-612; sequence RNQALKVYVPSYESYGRM. A helical transmembrane segment spans residues 613-636; that stretch reads WPHIHQRILAALFLFQVVMFGYLG. Topologically, residues 637 to 641 are extracellular; that stretch reads AKTFF. Residues 642-662 form a helical membrane-spanning segment; that stretch reads YTALVIPLIITSLIFGYVCRQ. The Cytoplasmic portion of the chain corresponds to 663-724; the sequence is KFYGGFEHTA…YQDFNAIAGV (62 aa).

The protein belongs to the CSC1 (TC 1.A.17) family. As to quaternary structure, homodimer.

Its subcellular location is the membrane. Acts as a hyperosmolarity-gated non-selective cation channel that permeates Ca(2+) ions. Mechanosensitive ion channel that converts mechanical stimuli into a flow of ions: activated in response to membrane stretch. Not activated in response to membrane poke. The protein is Hyperosmolality-gated Ca2+ permeable channel 3.1 of Arabidopsis thaliana (Mouse-ear cress).